The sequence spans 835 residues: Leucine--tRNA ligase (835 aa).

Residues 44–54 carry the 'HIGH' region motif; the sequence is PYPSGNIHMGH. A 'KMSKS' region motif is present at residues 587-591; it reads KMSKS. Lysine 590 provides a ligand contact to ATP.

The protein belongs to the class-I aminoacyl-tRNA synthetase family.

The protein localises to the cytoplasm. It catalyses the reaction tRNA(Leu) + L-leucine + ATP = L-leucyl-tRNA(Leu) + AMP + diphosphate. The sequence is that of Leucine--tRNA ligase from Lawsonia intracellularis (strain PHE/MN1-00).